The chain runs to 846 residues: Neurotactin (846 aa).

Residues 1 to 222 (MGELEEKETP…EDASDAPPKR (222 aa)) form a disordered region. Topologically, residues 1 to 324 (MGELEEKETP…LRGYKCSVDD (324 aa)) are cytoplasmic. Residues 11-20 (PTETTAAQQE) are compositionally biased toward low complexity. Positions 23–42 (EEPKETDKMLDKKEDAKEKT) are enriched in basic and acidic residues. Threonine 28 bears the Phosphothreonine; by PKC mark. Threonine 42 is modified (phosphothreonine). The residue at position 44 (serine 44) is a Phosphoserine. Position 47 is a phosphothreonine (threonine 47). Residues serine 48 and serine 52 each carry the phosphoserine modification. Basic and acidic residues predominate over residues 63 to 74 (AEKKIDDAELAK). Serine 75 carries the phosphoserine; by PKC modification. Residue serine 77 is modified to Phosphoserine. Basic and acidic residues-rich tracts occupy residues 95-111 (DSADDKKISKEEREVKP), 141-155 (LLEKEKEEDKDKEAN), 163-178 (GKDEQKSRPGLGERLR), and 185-205 (PSAEKEKKQLVNGDADAKSEA). Serine 103 is modified (phosphoserine; by PKC). Serine 169 is modified (phosphoserine; by PKC). Residues serine 186 and serine 203 each carry the phosphoserine modification. Position 206 is a phosphothreonine (threonine 206). Phosphoserine is present on serine 256. A Phosphothreonine modification is found at threonine 259. Serine 263 carries the phosphoserine modification. Position 269 is a phosphothreonine (threonine 269). A helical; Signal-anchor for type II membrane protein membrane pass occupies residues 325 to 346 (ALIVFGILLFVLLLGVIGYVLT). Over 347–846 (HETLTSPPLR…DIVPRYARVD (500 aa)) the chain is Extracellular. Asparagine 410, asparagine 417, and asparagine 428 each carry an N-linked (GlcNAc...) asparagine glycan. 2 disulfide bridges follow: cysteine 422–cysteine 437 and cysteine 600–cysteine 605. N-linked (GlcNAc...) asparagine glycans are attached at residues asparagine 636, asparagine 691, and asparagine 720. Cysteine 738 and cysteine 830 are disulfide-bonded.

In the C-terminal section; belongs to the type-B carboxylesterase/lipase family. In terms of tissue distribution, late in embryogenesis, expression is restricted to cells of the peripheral and central nervous system undergoing proliferation and differentiation. Also expressed in larval CNS, mesoderm and imaginal disks.

It is found in the membrane. Its function is as follows. May mediate or modulate cell adhesion between embryonic cells during development. This is Neurotactin (Nrt) from Drosophila melanogaster (Fruit fly).